The sequence spans 903 residues: DNA mismatch repair protein MutS (903 aa).

The tract at residues 1 to 89 (MPRSASQPPD…DEPAWGHHSQ (89 aa)) is disordered. Low complexity-rich tracts occupy residues 20–36 (APEP…SEPE) and 49–62 (ADAA…QATA). Position 719–726 (719–726 (GPNASGKS)) interacts with ATP.

This sequence belongs to the DNA mismatch repair MutS family.

Its function is as follows. This protein is involved in the repair of mismatches in DNA. It is possible that it carries out the mismatch recognition step. This protein has a weak ATPase activity. This Synechococcus sp. (strain CC9605) protein is DNA mismatch repair protein MutS.